The following is a 113-amino-acid chain: uncharacterized protein (113 aa).

Positions 1–29 (MLVVYMCIWVLYLLLFLFLFLFIASPASL) are cleaved as a signal peptide. Transmembrane regions (helical) follow at residues 34 to 54 (THIL…CAFF) and 56 to 76 (QVLC…FYFF).

It localises to the membrane. This is an uncharacterized protein from Saccharomyces cerevisiae (strain ATCC 204508 / S288c) (Baker's yeast).